Consider the following 255-residue polypeptide: Protein NEN4 (255 aa).

Residues 11 to 174 enclose the Exonuclease domain; the sequence is VFFDLETNVP…DDVRMNLEVL (164 aa). Mg(2+) is bound by residues D14 and E16. H161 (proton donor/acceptor) is an active-site residue. Residue D166 coordinates Mg(2+).

It depends on Mg(2+) as a cofactor. Expressed in the sieve elements and phloem pole pericycle cells.

The protein resides in the nucleus. In terms of biological role, probable exonuclease required for enuclation of sieve elements. This chain is Protein NEN4, found in Arabidopsis thaliana (Mouse-ear cress).